We begin with the raw amino-acid sequence, 480 residues long: MSSNRVLDLFKPFESFLPEVIAPERKVPYNQKLIWTGVSLLIFLILGQIPLYGIVSSETSDPLYWLRAMLASNRGTLLELGVSPIITSSMIFQFLQGTQLLQIRPESKQDRELFQIAQKVCAIILILGQALVVVMTGNYGAPSDLGLPICLLLIFQLMFASLIVMLLDELLSKGYGLGSGISLFTATNIAEQIFWRAFAPTTVNSGRGKEFEGAVIAFFHLLAVRKDKKRALVEAFYRTNLPNMFQVLMTVAIFLFVLYLQGFRYELPIRSTKVRGQIGIYPIKLFYTSNTPIMLQSALTSNIFLISQILFQKYPTNPLIRLIGVWGIRPGTQGPQMALSGLAYYIQPLMSLSEALLDPIKTIVYITFVLGSCAVFSKTWIEISGTSPRDIAKQFKDQGMVINGKRETSIYRELKKIIPTAAAFGGATIGALSVGSDLLGTLGSGASILMATTTIYGYYEAAAKEGGFTKNLVPGFSDLM.

Residues M1–K32 lie on the Cytoplasmic side of the membrane. The chain crosses the membrane as a helical span at residues L33–V55. Residues S56–G75 are Lumenal-facing. The helical transmembrane segment at T76–L95 threads the bilayer. The Cytoplasmic segment spans residues Q96–K119. A helical membrane pass occupies residues V120 to A141. The Lumenal segment spans residues P142–G146. The chain crosses the membrane as a helical span at residues L147 to L167. The Cytoplasmic portion of the chain corresponds to D168–E212. A helical transmembrane segment spans residues G213–V224. The Lumenal portion of the chain corresponds to R225–N240. Residues L241–L260 traverse the membrane as a helical segment. Over Q261–N290 the chain is Cytoplasmic. The chain crosses the membrane as a helical span at residues T291 to F311. Topologically, residues Q312–K361 are lumenal. A helical transmembrane segment spans residues T362–I381. Residues E382 to K416 are Cytoplasmic-facing. Residues I417–V434 traverse the membrane as a helical segment. Residues G435–D437 are Lumenal-facing. The chain crosses the membrane as a helical span at residues L438–Y459. The Cytoplasmic segment spans residues E460–M480.

It belongs to the SecY/SEC61-alpha family. As to quaternary structure, component of the heterotrimeric Sec61 complex, which is composed of SEC61, SBH1 and SSS1. Presumably three to four Sec61 heterotrimers assemble into an oligomeric ring with a central aqueous pore. In cotranslational ER import, the pore diameter varies from 9-15 A in a ribosome-free resting state to 40-60 A in a functional state when associated with the ribosome. The Sec61 complex is part of a channel-forming translocon complex whose composition seem to change dependent upon different functional states. During post-translational ER import the Sec61 complex associates with the Sec62/63 complex to form the Sec complex. SEC61 interacts with STT3, OST1, OST2, OST4, SWP1 and WBP1 components of the OT complex.

Its subcellular location is the endoplasmic reticulum membrane. Functionally, part of the Sec61 complex, which is the major component of a channel-forming translocon complex that mediates protein translocation across the endoplasmic reticulum (ER). The functional states of the translocon complex include co- and post-translational ER import, cotranslational membrane protein integration and retrograde transport of misfolded proteins out of the ER. In the cotranslational pathway, ribosomes synthesizing presecretory proteins are targeted to the translocon by the cytosolic signal recognition particle (SRP) and its ER-localized receptor. The association of the Sec61 complex with the ribosome is mediated by the 28S rRNA of the large ribosomal subunit. SRP-independent post-translational translocation requires the association of additional factors, such as the Sec62/63 complex and KAR2. In an initial step, the signal sequence seems to bind simultaneously to SEC61 and SEC62. A cycle of assembly and disassembly of Sec62/63 complex from SEC61 may govern the activity of the translocon. SEC61 mediates the association with the ribosome. The chain is Protein transport protein SEC61 (SEC61) from Saccharomyces cerevisiae (strain ATCC 204508 / S288c) (Baker's yeast).